The following is a 1102-amino-acid chain: Carbamoyl phosphate synthase large chain (1102 aa).

The segment at 1–408 (MPKRSDIQSV…ALQKALRSLE (408 aa)) is carboxyphosphate synthetic domain. The ATP site is built by Arg129, Arg175, Gly181, Gly182, Glu214, Ile216, Glu221, Gly247, Val248, His249, Gln291, and Glu305. The ATP-grasp 1 domain maps to 137–334 (EAVKEKIGYG…IAKIAAKLAV (198 aa)). Gln291, Glu305, and Asn307 together coordinate Mg(2+). Positions 291, 305, and 307 each coordinate Mn(2+). The interval 409 to 551 (KKGSQFAFTG…YFYSSYDEES (143 aa)) is oligomerization domain. The tract at residues 552 to 954 (EVAPRTKPAV…AYAKSQAGAY (403 aa)) is carbamoyl phosphate synthetic domain. Residues 682–873 (GRVLAEAGLP…LAKAAARISL (192 aa)) enclose the ATP-grasp 2 domain. 10 residues coordinate ATP: Arg718, Arg757, Leu759, Glu764, Gly789, Ile790, His791, Ser792, Gln832, and Glu844. Positions 832, 844, and 846 each coordinate Mg(2+). Mn(2+) contacts are provided by Gln832, Glu844, and Asn846. The 146-residue stretch at 955 to 1100 (GPLPTAGRAF…QEHAEHLTAA (146 aa)) folds into the MGS-like domain. The tract at residues 955 to 1102 (GPLPTAGRAF…HAEHLTAARD (148 aa)) is allosteric domain.

Belongs to the CarB family. As to quaternary structure, composed of two chains; the small (or glutamine) chain promotes the hydrolysis of glutamine to ammonia, which is used by the large (or ammonia) chain to synthesize carbamoyl phosphate. Tetramer of heterodimers (alpha,beta)4. It depends on Mg(2+) as a cofactor. Requires Mn(2+) as cofactor.

It carries out the reaction hydrogencarbonate + L-glutamine + 2 ATP + H2O = carbamoyl phosphate + L-glutamate + 2 ADP + phosphate + 2 H(+). The enzyme catalyses hydrogencarbonate + NH4(+) + 2 ATP = carbamoyl phosphate + 2 ADP + phosphate + 2 H(+). It participates in amino-acid biosynthesis; L-arginine biosynthesis; carbamoyl phosphate from bicarbonate: step 1/1. It functions in the pathway pyrimidine metabolism; UMP biosynthesis via de novo pathway; (S)-dihydroorotate from bicarbonate: step 1/3. Large subunit of the glutamine-dependent carbamoyl phosphate synthetase (CPSase). CPSase catalyzes the formation of carbamoyl phosphate from the ammonia moiety of glutamine, carbonate, and phosphate donated by ATP, constituting the first step of 2 biosynthetic pathways, one leading to arginine and/or urea and the other to pyrimidine nucleotides. The large subunit (synthetase) binds the substrates ammonia (free or transferred from glutamine from the small subunit), hydrogencarbonate and ATP and carries out an ATP-coupled ligase reaction, activating hydrogencarbonate by forming carboxy phosphate which reacts with ammonia to form carbamoyl phosphate. The polypeptide is Carbamoyl phosphate synthase large chain (Streptomyces griseus subsp. griseus (strain JCM 4626 / CBS 651.72 / NBRC 13350 / KCC S-0626 / ISP 5235)).